Reading from the N-terminus, the 137-residue chain is Nucleoside diphosphate kinase (137 aa).

Residues K10, F59, R87, T93, R104, and N114 each contribute to the ATP site. Residue H117 is the Pros-phosphohistidine intermediate of the active site.

It belongs to the NDK family. As to quaternary structure, homotetramer. Mg(2+) serves as cofactor.

The protein resides in the cytoplasm. It catalyses the reaction a 2'-deoxyribonucleoside 5'-diphosphate + ATP = a 2'-deoxyribonucleoside 5'-triphosphate + ADP. The catalysed reaction is a ribonucleoside 5'-diphosphate + ATP = a ribonucleoside 5'-triphosphate + ADP. Functionally, major role in the synthesis of nucleoside triphosphates other than ATP. The ATP gamma phosphate is transferred to the NDP beta phosphate via a ping-pong mechanism, using a phosphorylated active-site intermediate. This chain is Nucleoside diphosphate kinase, found in Streptomyces avermitilis (strain ATCC 31267 / DSM 46492 / JCM 5070 / NBRC 14893 / NCIMB 12804 / NRRL 8165 / MA-4680).